Here is a 390-residue protein sequence, read N- to C-terminus: Argininosuccinate synthase (390 aa).

Residue 6-14 (AYSGGLDTT) participates in ATP binding. Tyrosine 84 is an L-citrulline binding site. Glycine 114 contacts ATP. L-aspartate is bound by residues threonine 116, asparagine 120, and aspartate 121. Asparagine 120 serves as a coordination point for L-citrulline. The L-citrulline site is built by arginine 124, serine 171, serine 180, glutamate 253, and tyrosine 265.

This sequence belongs to the argininosuccinate synthase family. Type 1 subfamily. In terms of assembly, homotetramer.

The protein resides in the cytoplasm. The catalysed reaction is L-citrulline + L-aspartate + ATP = 2-(N(omega)-L-arginino)succinate + AMP + diphosphate + H(+). The protein operates within amino-acid biosynthesis; L-arginine biosynthesis; L-arginine from L-ornithine and carbamoyl phosphate: step 2/3. In Sulfurisphaera tokodaii (strain DSM 16993 / JCM 10545 / NBRC 100140 / 7) (Sulfolobus tokodaii), this protein is Argininosuccinate synthase.